The chain runs to 309 residues: Putative G-protein coupled receptor B0244.4 (309 aa).

6 consecutive transmembrane segments (helical) span residues 39 to 59 (SIIFWIDFLIPCTLFVVACFL), 82 to 102 (YIFMVSRAISALTACVIMLAL), 114 to 134 (IYFLFFLIDDLSFYSLLGSYV), 162 to 182 (FAIANLITSVVLAITTAMFQA), 204 to 224 (IMLVLILTSFLIPIVTLSFVL), and 256 to 276 (WTLFTFTLITLTEAIPSFYLV).

The protein belongs to the G-protein coupled receptor 1 family. B0244 subfamily.

The protein localises to the cell membrane. This is Putative G-protein coupled receptor B0244.4 from Caenorhabditis elegans.